Reading from the N-terminus, the 519-residue chain is Aldehyde dehydrogenase, mitochondrial (519 aa).

A mitochondrion-targeting transit peptide spans 1–19; it reads MLRAALSTARRGPRLSRLL. The SIFI-degron signature appears at 12-26; it reads GPRLSRLLSAAATSA. Lys-54, Lys-75, Lys-80, and Lys-161 each carry N6-acetyllysine. An NAD(+)-binding site is contributed by 264–269; the sequence is GSTEVG. The active-site Proton acceptor is Glu-287. Catalysis depends on Cys-321, which acts as the Nucleophile. 8 positions are modified to N6-acetyllysine: Lys-370, Lys-377, Lys-385, Lys-409, Lys-428, Lys-430, Lys-443, and Lys-453.

Belongs to the aldehyde dehydrogenase family. As to quaternary structure, homotetramer. Post-translationally, in response to mitochondrial stress, the precursor protein is ubiquitinated by the SIFI complex in the cytoplasm before mitochondrial import, leading to its degradation. Within the SIFI complex, UBR4 initiates ubiquitin chain that are further elongated or branched by KCMF1.

The protein localises to the mitochondrion matrix. The enzyme catalyses an aldehyde + NAD(+) + H2O = a carboxylate + NADH + 2 H(+). The protein operates within alcohol metabolism; ethanol degradation; acetate from ethanol: step 2/2. Its function is as follows. Required for clearance of cellular formaldehyde, a cytotoxic and carcinogenic metabolite that induces DNA damage. This chain is Aldehyde dehydrogenase, mitochondrial (Aldh2), found in Rattus norvegicus (Rat).